The chain runs to 118 residues: Protein MGF 110-6L (118 aa).

The first 18 residues, 1 to 18, serve as a signal peptide directing secretion; it reads MLVIFLGILGLLASQVSS. Asn-96 is a glycosylation site (N-linked (GlcNAc...) asparagine; by host). The Prevents secretion from ER signature appears at 115–118; sequence KDEL.

It belongs to the asfivirus MGF 110 family. N-glycosylated.

It is found in the host endoplasmic reticulum lumen. In terms of biological role, plays a role in virus cell tropism, and may be required for efficient virus replication in macrophages. The sequence is that of Protein MGF 110-6L from African swine fever virus (isolate Tick/South Africa/Pretoriuskop Pr4/1996) (ASFV).